We begin with the raw amino-acid sequence, 224 residues long: MAQKEEAAVATEAASQNGEDLENLDDPEKLKELIELPPFEIVTGERLPANFFKFQFRNVEYSSGRNKTFLCYVVEAQGKGGQVQASRGYLEDEHAAAHAEEAFFNTILPAFDPALRYNVTWYVSSSPCAACADRIIKTLSKTKNLRLLILVGRLFMWEEPEIQAALKKLKEAGCKLRIMKPQDFEYVWQNFVEQEEGESKAFQPWEDIQENFLYYEEKLADILK.

The segment at methionine 1–leucine 24 is disordered. 2 residues coordinate Zn(2+): glutamate 60 and histidine 98. In terms of domain architecture, CMP/dCMP-type deaminase spans glycine 64 to leucine 169. The active-site Proton donor is the glutamate 100. Zn(2+) contacts are provided by cysteine 128 and cysteine 131.

This sequence belongs to the cytidine and deoxycytidylate deaminase family. Homotetramer. Zn(2+) serves as cofactor. As to expression, expressed exclusively in heart and skeletal muscle.

It carries out the reaction cytidine(6666) in apoB mRNA + H2O + H(+) = uridine(6666) in apoB mRNA + NH4(+). Functionally, probable C to U editing enzyme whose physiological substrate is not yet known. Does not display detectable apoB mRNA editing. Has a low intrinsic cytidine deaminase activity. May play a role in the epigenetic regulation of gene expression through the process of active DNA demethylation. The sequence is that of C-&gt;U-editing enzyme APOBEC-2 (APOBEC2) from Homo sapiens (Human).